Here is a 488-residue protein sequence, read N- to C-terminus: Rhamnulokinase (488 aa).

13 to 17 (ASSGR) contributes to the ATP binding site. A disulfide bridge links Cys68 with Cys222. Residues Gly83 and 236–238 (HDT) each bind substrate. Asp237 (proton acceptor) is an active-site residue. Thr259 is an ATP binding site. Asn296 lines the substrate pocket. An ATP-binding site is contributed by Gln304. An intrachain disulfide couples Cys353 to Cys370. Residue Gly402 coordinates ATP. Cys413 and Cys417 form a disulfide bridge.

This sequence belongs to the rhamnulokinase family. Mg(2+) serves as cofactor.

The catalysed reaction is L-rhamnulose + ATP = L-rhamnulose 1-phosphate + ADP + H(+). It functions in the pathway carbohydrate degradation; L-rhamnose degradation; glycerone phosphate from L-rhamnose: step 2/3. Functionally, involved in the catabolism of L-rhamnose (6-deoxy-L-mannose). Catalyzes the transfer of the gamma-phosphate group from ATP to the 1-hydroxyl group of L-rhamnulose to yield L-rhamnulose 1-phosphate. The chain is Rhamnulokinase from Klebsiella pneumoniae subsp. pneumoniae (strain ATCC 700721 / MGH 78578).